The following is a 167-amino-acid chain: Gametocyte-specific factor 1 (167 aa).

Position 8 is a phosphoserine (serine 8). 2 CHHC U11-48K-type zinc fingers span residues 14–41 (LLQC…RKNH) and 48–75 (LATC…DDKS). Zn(2+) contacts are provided by cysteine 17, histidine 23, histidine 33, cysteine 37, cysteine 51, histidine 57, histidine 67, and cysteine 71.

Belongs to the UPF0224 (FAM112) family. In terms of tissue distribution, expressed abundantly in adult testis, at moderate levels in unfertilized eggs and ovaries and weakly in embryonic stem cells.

The protein resides in the cytoplasm. In terms of biological role, required for spermatogenesis and is involved in the suppression of retrotransposon transcription in male germ cells. The polypeptide is Gametocyte-specific factor 1 (Mus musculus (Mouse)).